Here is a 201-residue protein sequence, read N- to C-terminus: Peptidyl-tRNA hydrolase (201 aa).

Tyrosine 14 contributes to the tRNA binding site. Residue histidine 19 is the Proton acceptor of the active site. TRNA contacts are provided by tyrosine 64, asparagine 66, and asparagine 112.

It belongs to the PTH family. Monomer.

Its subcellular location is the cytoplasm. It carries out the reaction an N-acyl-L-alpha-aminoacyl-tRNA + H2O = an N-acyl-L-amino acid + a tRNA + H(+). Its function is as follows. Hydrolyzes ribosome-free peptidyl-tRNAs (with 1 or more amino acids incorporated), which drop off the ribosome during protein synthesis, or as a result of ribosome stalling. In terms of biological role, catalyzes the release of premature peptidyl moieties from peptidyl-tRNA molecules trapped in stalled 50S ribosomal subunits, and thus maintains levels of free tRNAs and 50S ribosomes. This chain is Peptidyl-tRNA hydrolase, found in Bradyrhizobium diazoefficiens (strain JCM 10833 / BCRC 13528 / IAM 13628 / NBRC 14792 / USDA 110).